The primary structure comprises 360 residues: Variable large protein 18 (360 aa).

Positions methionine 1–glycine 26 are cleaved as a signal peptide. Cysteine 27 carries N-palmitoyl cysteine lipidation. Cysteine 27 is lipidated: S-diacylglycerol cysteine.

This sequence belongs to the variable large protein (Vlp) family. Alpha subfamily.

Its subcellular location is the cell outer membrane. The Vlp and Vsp proteins are antigenically distinct proteins, only one vlp or vsp gene is transcriptionally active at any one time. Switching between these genes is a mechanism of host immune response evasion. This Borrelia hermsii protein is Variable large protein 18.